Here is a 393-residue protein sequence, read N- to C-terminus: MSEPFMFEKPLGMRDVLPNLHSMQRKLGDRVLQEFRLWGYEQVQTPTLEYYETVGKASAISDKQLFKLIDFHGNTLVLRPDMTAPIARLVSSSMKDIPYPLRLSYCSSLYRALQTEGGRPAEFAQVGVELVGDHTASADGEMLLLLNRALIQAGLDHFQVAVGHIGFLNALFLEIFGTVERAELLRRQLYEKNDVGFKEQVKAFGLSSIDEKKLLKLSRLRGNEAILAEAEQLTESAEGKQAVAELRDLWQGLKEGGLTRYMKLDLSLVLHMSYYTGCIFEVYHDRLPRPLGGGGRYDHLLAKFGRPGPATGFGLRLDLLAEAVGKLEVQPKKRCLLYSRERRQEAYRKATALREKGMQVVLQDVAGVDDIDKMSASYEEIVYLIGKTEEGKR.

The protein belongs to the class-II aminoacyl-tRNA synthetase family. HisZ subfamily. Heteromultimer composed of HisG and HisZ subunits.

The protein localises to the cytoplasm. The protein operates within amino-acid biosynthesis; L-histidine biosynthesis; L-histidine from 5-phospho-alpha-D-ribose 1-diphosphate: step 1/9. Its function is as follows. Required for the first step of histidine biosynthesis. May allow the feedback regulation of ATP phosphoribosyltransferase activity by histidine. The chain is ATP phosphoribosyltransferase regulatory subunit from Shouchella clausii (strain KSM-K16) (Alkalihalobacillus clausii).